Consider the following 643-residue polypeptide: uncharacterized protein (643 aa).

A compositionally biased stretch (low complexity) spans 179–199; it reads FKSSQLQQSPSPNKKSPSYSQ. 2 disordered regions span residues 179–200 and 349–377; these read FKSS…YSQV and KRSN…STEN.

This is an uncharacterized protein from Caenorhabditis elegans.